The sequence spans 110 residues: Large ribosomal subunit protein uL22 (110 aa).

Belongs to the universal ribosomal protein uL22 family. Part of the 50S ribosomal subunit.

This protein binds specifically to 23S rRNA; its binding is stimulated by other ribosomal proteins, e.g. L4, L17, and L20. It is important during the early stages of 50S assembly. It makes multiple contacts with different domains of the 23S rRNA in the assembled 50S subunit and ribosome. Functionally, the globular domain of the protein is located near the polypeptide exit tunnel on the outside of the subunit, while an extended beta-hairpin is found that lines the wall of the exit tunnel in the center of the 70S ribosome. The chain is Large ribosomal subunit protein uL22 from Vibrio campbellii (strain ATCC BAA-1116).